The chain runs to 222 residues: Cytidylate kinase (222 aa).

Residue 11-19 (GPSGSGKST) coordinates ATP.

The protein belongs to the cytidylate kinase family. Type 1 subfamily.

Its subcellular location is the cytoplasm. It catalyses the reaction CMP + ATP = CDP + ADP. The enzyme catalyses dCMP + ATP = dCDP + ADP. The chain is Cytidylate kinase from Ureaplasma urealyticum serovar 10 (strain ATCC 33699 / Western).